The sequence spans 212 residues: Glycerol-3-phosphate acyltransferase (212 aa).

Helical transmembrane passes span 3–23 (IIIM…LWIG), 70–90 (IPII…FAII), 110–130 (AGVL…IFLL), 143–163 (ITVA…GFIL), and 164–184 (TDYD…IIIR).

This sequence belongs to the PlsY family. As to quaternary structure, probably interacts with PlsX.

The protein resides in the cell membrane. The catalysed reaction is an acyl phosphate + sn-glycerol 3-phosphate = a 1-acyl-sn-glycero-3-phosphate + phosphate. Its pathway is lipid metabolism; phospholipid metabolism. Catalyzes the transfer of an acyl group from acyl-phosphate (acyl-PO(4)) to glycerol-3-phosphate (G3P) to form lysophosphatidic acid (LPA). This enzyme utilizes acyl-phosphate as fatty acyl donor, but not acyl-CoA or acyl-ACP. The sequence is that of Glycerol-3-phosphate acyltransferase from Streptococcus agalactiae serotype III (strain NEM316).